Consider the following 129-residue polypeptide: MSGGRRKEEPPQPQLANGALKVSVWSKVLRSDAAWDDKDEFLDVIYWFRQIIALVLGVIWGVLPLRGFLGIAGFCLINAGVLYLYFSNYLQIDEEEYGGTWELTKEGFMTSFALFMVIWIIFYTAIHYD.

At 1-44 (MSGGRRKEEPPQPQLANGALKVSVWSKVLRSDAAWDDKDEFLDV) the chain is on the cytoplasmic side. Residues 45–65 (IYWFRQIIALVLGVIWGVLPL) form a helical membrane-spanning segment. Position 66 (arginine 66) is a topological domain, lumenal. The chain crosses the membrane as a helical span at residues 67–84 (GFLGIAGFCLINAGVLYL). Over 85-103 (YFSNYLQIDEEEYGGTWEL) the chain is Cytoplasmic. A helical transmembrane segment spans residues 104-127 (TKEGFMTSFALFMVIWIIFYTAIH). Residues 128–129 (YD) lie on the Lumenal side of the membrane.

It belongs to the EMC6 family. Component of the GET- and EMC-like (GEL) complex, composed of RAB5IF/OPTI and TMCO1. The GEL complex is part of the multi-pass translocon (MPT) complex, composed of three subcomplexes, the GEL complex (composed of RAB5IF/OPTI and TMCO1), the BOS complex (composed of NCLN/Nicalin, NOMO1 and TMEM147) and the PAT complex (composed of WDR83OS/Asterix and CCDC47). The MPT complex associates with the SEC61 complex. Interacts with NDUFS3, NDUFA4, NDUFV1, NDUFA9 and NDUFS8 of the mitochondrial membrane respiratory chain NADH dehydrogenase (Complex I). Interacts with UQCRC2 of the ubiquinol-cytochrome c reductase complex (Complex III). Interacts with COX5A and COX7C of the cytochrome c oxidase complex (Complex IV). As to expression, expressed in neuronal cells.

The protein resides in the endoplasmic reticulum membrane. It is found in the mitochondrion inner membrane. In terms of biological role, component of the multi-pass translocon (MPT) complex that mediates insertion of multi-pass membrane proteins into the lipid bilayer of membranes. The MPT complex takes over after the SEC61 complex: following membrane insertion of the first few transmembrane segments of proteins by the SEC61 complex, the MPT complex occludes the lateral gate of the SEC61 complex to promote insertion of subsequent transmembrane regions. Within the MPT complex, the GEL subcomplex may mediate insertion of transmembrane regions into the membrane. In addition to its role in multi-pass membrane insertion, RAB5IF/OPTI also acts as an assembly factor for mitochondrial respiratory complexes. The protein is GEL complex subunit OPTI of Mus musculus (Mouse).